A 484-amino-acid chain; its full sequence is Aspartyl/glutamyl-tRNA(Asn/Gln) amidotransferase subunit B (484 aa).

It belongs to the GatB/GatE family. GatB subfamily. Heterotrimer of A, B and C subunits.

It catalyses the reaction L-glutamyl-tRNA(Gln) + L-glutamine + ATP + H2O = L-glutaminyl-tRNA(Gln) + L-glutamate + ADP + phosphate + H(+). The catalysed reaction is L-aspartyl-tRNA(Asn) + L-glutamine + ATP + H2O = L-asparaginyl-tRNA(Asn) + L-glutamate + ADP + phosphate + 2 H(+). Functionally, allows the formation of correctly charged Asn-tRNA(Asn) or Gln-tRNA(Gln) through the transamidation of misacylated Asp-tRNA(Asn) or Glu-tRNA(Gln) in organisms which lack either or both of asparaginyl-tRNA or glutaminyl-tRNA synthetases. The reaction takes place in the presence of glutamine and ATP through an activated phospho-Asp-tRNA(Asn) or phospho-Glu-tRNA(Gln). The protein is Aspartyl/glutamyl-tRNA(Asn/Gln) amidotransferase subunit B of Anaeromyxobacter dehalogenans (strain 2CP-C).